The following is a 324-amino-acid chain: MAELEFEKPVVELRNKIRELKDYTKNSQMDFSEEIRILEDKLENLEEDIYGNMKVWDRVQIARHAERPTTLDYIEHLFTDFFECHGDRLFGDDAAIVGGIAKYKGMPVTVIGHQRGKDTKENIRRNFGMPHPEGYRKALRLMKQAEKFNRPIICFIDTKGAYPGKAAEERGQSEAIARNLFEMAGLTVPVICIVIGEGGSGGALGLGVGDYIHMLENSTYSVITPEGAAAILWKDAGKAKEAAEAMRITAADLKELGVIDEIIPEAKGGAHRNVLKQSENIDLMLRKTFEQLNGISKDELIEKRYEKYMKIGQVSFSNASIWIK.

Residues 37–291 form the CoA carboxyltransferase C-terminal domain; that stretch reads ILEDKLENLE…DLMLRKTFEQ (255 aa).

This sequence belongs to the AccA family. Acetyl-CoA carboxylase is a heterohexamer composed of biotin carboxyl carrier protein (AccB), biotin carboxylase (AccC) and two subunits each of ACCase subunit alpha (AccA) and ACCase subunit beta (AccD).

The protein localises to the cytoplasm. It catalyses the reaction N(6)-carboxybiotinyl-L-lysyl-[protein] + acetyl-CoA = N(6)-biotinyl-L-lysyl-[protein] + malonyl-CoA. It functions in the pathway lipid metabolism; malonyl-CoA biosynthesis; malonyl-CoA from acetyl-CoA: step 1/1. In terms of biological role, component of the acetyl coenzyme A carboxylase (ACC) complex. First, biotin carboxylase catalyzes the carboxylation of biotin on its carrier protein (BCCP) and then the CO(2) group is transferred by the carboxyltransferase to acetyl-CoA to form malonyl-CoA. In Bacillus cereus (strain Q1), this protein is Acetyl-coenzyme A carboxylase carboxyl transferase subunit alpha.